Reading from the N-terminus, the 458-residue chain is Argininosuccinate lyase (458 aa).

Belongs to the lyase 1 family. Argininosuccinate lyase subfamily.

It localises to the cytoplasm. It catalyses the reaction 2-(N(omega)-L-arginino)succinate = fumarate + L-arginine. It participates in amino-acid biosynthesis; L-arginine biosynthesis; L-arginine from L-ornithine and carbamoyl phosphate: step 3/3. The sequence is that of Argininosuccinate lyase from Salmonella typhi.